Reading from the N-terminus, the 411-residue chain is MDDKFASKFEIDVLNKLLNKNFSYDLAIILKKIGGLDYRKKVFINGECIGILEFDLIDLDWKFHPYASYYLIEEPKIKIKPTKRKLKGKKVPVDLIENAEELKDINENDYVGVEVGNYVGVAVKKGDTIKIKDLTLKKELRFEKIEDYLRKNKDRIEKLEKKSLSIIKKYYEMCKNKNYAINTSFSGGKDSSVSTLLANKVIDDLEVIFIDTGLEFKDTIDFVKKFAKKYDLNLVVLKGKNFWEYLEKEGIPTKDYRWCNSVCKLEPLKEYLKKYKRVYTIDGSRRYESFTREKLTYERKSGFIENQINIFPILDWRGTDVWSWIYLNDVIYNELYDKGFERIGCYMCPAALNAEFLRVKELYPELFNKWVDVLKRFGYDEDEILRGFWRWKELPPKMKELKKILENKEKK.

In the C-terminal section; belongs to the PAPS reductase family.

This is an uncharacterized protein from Methanocaldococcus jannaschii (strain ATCC 43067 / DSM 2661 / JAL-1 / JCM 10045 / NBRC 100440) (Methanococcus jannaschii).